Consider the following 283-residue polypeptide: Isochorismatase domain-containing protein 1 (283 aa).

Belongs to the isochorismatase family.

The sequence is that of Isochorismatase domain-containing protein 1 (isoc1) from Salmo salar (Atlantic salmon).